We begin with the raw amino-acid sequence, 360 residues long: Hyaluronan and proteoglycan link protein 3 (360 aa).

Residues 1–17 (MGLLLLVPLLLLPGSYG) form the signal peptide. Residues 48–164 (KLVVETPEET…ESGLVELELR (117 aa)) enclose the Ig-like V-type domain. Intrachain disulfides connect Cys70-Cys146, Cys188-Cys259, Cys212-Cys233, Cys286-Cys356, and Cys311-Cys332. Link domains follow at residues 166 to 261 (VVFP…FCFA) and 266 to 358 (GRVY…YCYR).

This sequence belongs to the HAPLN family. As to expression, widely expressed with highest levels in spleen and placenta.

The protein resides in the secreted. The protein localises to the extracellular space. It is found in the extracellular matrix. Its function is as follows. May function in hyaluronic acid binding. In Homo sapiens (Human), this protein is Hyaluronan and proteoglycan link protein 3 (HAPLN3).